The chain runs to 732 residues: Zinc/cadmium/lead-transporting P-type ATPase (732 aa).

Residues 1–124 (MSTPDNHGKK…QAAEEPQASR (124 aa)) are Cytoplasmic-facing. The 65-residue stretch at 48–112 (TRYSWKVSGM…ALQKAGYSLR (65 aa)) folds into the HMA domain. Positions 58, 59, and 62 each coordinate Zn(2+). Residues 125–145 (LKENLPLITLIVMMAISWGLE) form a helical membrane-spanning segment. Q146 is a topological domain (periplasmic). The helical transmembrane segment at 147-167 (FNHPFGQLAFIATTLVGLYPI) threads the bilayer. Topologically, residues 168 to 179 (ARQALRLIKSGS) are cytoplasmic. The chain crosses the membrane as a helical span at residues 180-197 (YFAIETLMSVAAIGALFI). The Periplasmic portion of the chain corresponds to 198-202 (GATAE). The helical transmembrane segment at 203-222 (AAMVLLLFLIGERLEGWAAS) threads the bilayer. The Cytoplasmic portion of the chain corresponds to 223–356 (RARQGVSALM…IDRFSRIYTP (134 aa)). The chain crosses the membrane as a helical span at residues 357 to 377 (AIMAVALLVTLVPPLLFAASW). At 378–383 (QEWIYK) the chain is on the periplasmic side. The chain crosses the membrane as a helical span at residues 384-404 (GLTLLLIGCPCALVISTPAAI). Positions 392 and 394 each coordinate Zn(2+). At 405–685 (TSGLAAAARR…RATHANIRQN (281 aa)) the chain is on the cytoplasmic side. D436 serves as the catalytic 4-aspartylphosphate intermediate. Mg(2+)-binding residues include D436, T438, and D628. A helical membrane pass occupies residues 686 to 702 (ITIALGLKGIFLVTTLL). The Periplasmic segment spans residues 703-707 (GMTGL). The chain crosses the membrane as a helical span at residues 708-729 (WLAVLADTGATVLVTANALRLL). Residue D714 participates in Zn(2+) binding. At 730–732 (RRR) the chain is on the cytoplasmic side.

Belongs to the cation transport ATPase (P-type) (TC 3.A.3) family. Type IB subfamily.

It is found in the cell inner membrane. The enzyme catalyses Pb(2+)(in) + ATP + H2O = Pb(2+)(out) + ADP + phosphate + H(+). It carries out the reaction Zn(2+)(in) + ATP + H2O = Zn(2+)(out) + ADP + phosphate + H(+). The catalysed reaction is Cd(2+)(in) + ATP + H2O = Cd(2+)(out) + ADP + phosphate + H(+). Inhibited by orthovanadate. In terms of biological role, confers resistance to zinc, cadmium and lead. Couples the hydrolysis of ATP with the export of zinc, cadmium or lead, with highest activity when the metals are present as metal-thiolate complexes. Can also bind nickel, copper, cobalt and mercury. The protein is Zinc/cadmium/lead-transporting P-type ATPase of Escherichia coli (strain K12).